The primary structure comprises 402 residues: Serine/threonine transporter SstT (402 aa).

A run of 9 helical transmembrane segments spans residues 19–39 (IGVV…AIGL), 43–63 (LFVG…VISA), 86–106 (TFAA…TLIL), 138–158 (AITE…GLAM), 179–199 (VVKW…FTSI), 212–232 (LLIL…NPII), 287–307 (IPLG…ILTL), 327–347 (VVAA…LLLI), and 354–374 (FGIS…VGVI).

The protein belongs to the dicarboxylate/amino acid:cation symporter (DAACS) (TC 2.A.23) family.

It is found in the cell membrane. The enzyme catalyses L-serine(in) + Na(+)(in) = L-serine(out) + Na(+)(out). The catalysed reaction is L-threonine(in) + Na(+)(in) = L-threonine(out) + Na(+)(out). In terms of biological role, involved in the import of serine and threonine into the cell, with the concomitant import of sodium (symport system). The sequence is that of Serine/threonine transporter SstT from Streptococcus agalactiae serotype Ia (strain ATCC 27591 / A909 / CDC SS700).